We begin with the raw amino-acid sequence, 86 residues long: Mu-theraphotoxin-Cg2a 1 (86 aa).

Positions 1 to 21 (MKVSVVITLAVLGIMFVWASA) are cleaved as a signal peptide. Positions 22 to 50 (AELEERGSDQRDSPAWLKSMERIFQSEER) are excised as a propeptide. 3 disulfide bridges follow: C52/C66, C59/C71, and C65/C78. The residue at position 84 (F84) is a Phenylalanine amide.

Belongs to the neurotoxin 10 (Hwtx-1) family. 37 (Jztx-31) subfamily. As to expression, expressed by the venom gland.

The protein resides in the secreted. Inhibits both peak current and fast inactivation of voltage-gated sodium channels (Nav) channels. Inhibits the inactivation of Nav on DRG neurons (EC(50)=1.77 uM) and peak current of cardiac myocytes (IC(50)=0.90 uM). The polypeptide is Mu-theraphotoxin-Cg2a 1 (Chilobrachys guangxiensis (Chinese earth tiger tarantula)).